The chain runs to 266 residues: Imidazole glycerol phosphate synthase subunit HisF (266 aa).

Residues Asp-11 and Asp-130 contribute to the active site. Positions 134-157 (RTPEEAARPGPDGAPRGEGWDVYS) are disordered.

It belongs to the HisA/HisF family. Heterodimer of HisH and HisF.

It is found in the cytoplasm. It catalyses the reaction 5-[(5-phospho-1-deoxy-D-ribulos-1-ylimino)methylamino]-1-(5-phospho-beta-D-ribosyl)imidazole-4-carboxamide + L-glutamine = D-erythro-1-(imidazol-4-yl)glycerol 3-phosphate + 5-amino-1-(5-phospho-beta-D-ribosyl)imidazole-4-carboxamide + L-glutamate + H(+). Its pathway is amino-acid biosynthesis; L-histidine biosynthesis; L-histidine from 5-phospho-alpha-D-ribose 1-diphosphate: step 5/9. In terms of biological role, IGPS catalyzes the conversion of PRFAR and glutamine to IGP, AICAR and glutamate. The HisF subunit catalyzes the cyclization activity that produces IGP and AICAR from PRFAR using the ammonia provided by the HisH subunit. In Paracidovorax citrulli (strain AAC00-1) (Acidovorax citrulli), this protein is Imidazole glycerol phosphate synthase subunit HisF.